We begin with the raw amino-acid sequence, 631 residues long: MRRPKKYEAGEATQYISRRAAIRKLQLSLNDFRRLCILKGVYPREPKHRRRAQKGSSEIKILYHTKDIRFLLHESIVWTLRDYKIFAKKTSRDRAIKDFRNLKRRLALFPEIKLDHIVKERYPTFIDALKDLDDCLTLLFLFSTFPSLHLIPREQSNLCRRLTIEFLHYVIASKSLRKVFISIKGYYFQAEIKGQKVTWIMPHYYPFKPQSRQEVDFKVMSIFVEFYTILQGFTNFRLFHGLNLAYPPQFPSSLLQDNEDTFKDEASFVSDRIAALNFELLRTDKVQEDEEEPDIDMELLEQDGDSKRIIKMKQEAQEVSRLRTLFKGLKFFINREVPREPLVILIRSFGGKVSWDASVFPGATFAENDETITHQIVDRPSLSTQYISRDYIQPQWLFDCVNQRQLLPTNDYFLGETLPPHLSPFVDSKRDSYIPPEEKALHDPSLIETHEQSEEESEEDEAEKEEEEADQELLDAQLQLAYQQETAEYKKYGGPDGVNEDEEDLSEEDDEEDDDEEDVDKEDVDEQTKRKQQEKEKMSVQSGKVHKVNKRQVHKAEVDEHRLQARMVKPRHRNLFRKLIREKQTKEKEEWLLRKKRRNIDADTKEAKKAAKREARKLAAEAAARAAKLVK.

The 94-residue stretch at 321 to 414 (RLRTLFKGLK…QLLPTNDYFL (94 aa)) folds into the BRCT domain. Residues 428–442 (SKRDSYIPPEEKALH) are compositionally biased toward basic and acidic residues. Disordered regions lie at residues 428–471 (SKRD…EADQ) and 489–560 (YKKY…EVDE). Phosphoserine occurs at positions 453 and 457. 2 stretches are compositionally biased toward acidic residues: residues 453–471 (SEEE…EADQ) and 498–525 (VNED…EDVD). Positions 526–538 (EQTKRKQQEKEKM) are enriched in basic and acidic residues. Positions 544–553 (KVHKVNKRQV) are enriched in basic residues. A coiled-coil region spans residues 593-629 (LRKKRRNIDADTKEAKKAAKREARKLAAEAAARAAKL).

The protein belongs to the pescadillo family.

It localises to the nucleus. The protein localises to the nucleolus. The protein resides in the nucleoplasm. In terms of biological role, required for maturation of ribosomal RNAs and formation of the large ribosomal subunit. This is Pescadillo homolog from Drosophila persimilis (Fruit fly).